The primary structure comprises 953 residues: ALS2 C-terminal-like protein (953 aa).

8 MORN repeats span residues 358 to 380 (YEGE…DGRN), 381 to 403 (HVGN…QASE), 409 to 431 (YKCH…TDEV), 432 to 452 (YKGY…SGPQ), 459 to 479 (YTGH…DGDR), 483 to 505 (YIGM…AGVC), 506 to 528 (YQGT…DDSL), and 529 to 552 (YEGT…NGFT). The VPS9 domain occupies 796 to 942 (LFPDTQLLEF…IQKEDMRLHR (147 aa)).

As to quaternary structure, homodimer. Forms a heteromeric complex with ALS2. Interacts with ALS2 and RAB5A. Expressed in heart and kidney.

The protein localises to the cytoplasm. Acts as a guanine nucleotide exchange factor (GEF) for Rab5 GTPase. Regulates the ALS2-mediated endosome dynamics. This Homo sapiens (Human) protein is ALS2 C-terminal-like protein (ALS2CL).